A 1255-amino-acid polypeptide reads, in one-letter code: ATP-binding cassette sub-family B member 5 (1255 aa).

The helical transmembrane segment at I46–M66 threads the bilayer. The ABC transmembrane type-1 1 domain occupies L51–T351. N86 and N92 each carry an N-linked (GlcNAc...) asparagine glycan. A helical transmembrane segment spans residues I104–V124. N189 carries an N-linked (GlcNAc...) asparagine glycan. The next 2 helical transmembrane spans lie at L290–G310 and I314–I334. N-linked (GlcNAc...) asparagine glycans are attached at residues N372 and N391. An ABC transporter 1 domain is found at I387–A623. G422 to S429 provides a ligand contact to ATP. N-linked (GlcNAc...) asparagine glycosylation is present at N643. 2 consecutive transmembrane segments (helical) span residues V694–F714 and M738–Y758. One can recognise an ABC transmembrane type-1 2 domain in the interval V694–K981. Residue N790 is glycosylated (N-linked (GlcNAc...) asparagine). Helical transmembrane passes span L814–W836, L841–F863, and M955–W975. The 239-residue stretch at L1016–A1254 folds into the ABC transporter 2 domain. N-linked (GlcNAc...) asparagine glycosylation occurs at N1036. G1051 to S1058 is a binding site for ATP. N-linked (GlcNAc...) asparagine glycosylation is found at N1105, N1189, and N1229.

This sequence belongs to the ABC transporter superfamily. ABCB family. Multidrug resistance exporter (TC 3.A.1.201) subfamily. As to expression, in developing eye, expressed in basal limbal epithelium but not in central cornea. Acts as a marker of limbal stem cells.

It localises to the cell membrane. It carries out the reaction daunorubicin(in) + ATP + H2O = daunorubicin(out) + ADP + phosphate + H(+). In terms of biological role, energy-dependent efflux transporter responsible for decreased drug accumulation in multidrug-resistant cells. Specifically present in limbal stem cells, where it plays a key role in corneal development and repair. This chain is ATP-binding cassette sub-family B member 5, found in Mus musculus (Mouse).